We begin with the raw amino-acid sequence, 247 residues long: Mast cell protease 2 (247 aa).

The signal sequence occupies residues 1-19 (MHLLALHLLLFLLGSRAKA). The propeptide at 20-21 (GE) is activation peptide. A Peptidase S1 domain is found at 22 to 245 (IIGGTECKPH…YRPWINKILR (224 aa)). A disulfide bond links Cys-51 and Cys-67. The active-site Charge relay system is His-66. An N-linked (GlcNAc...) asparagine glycan is attached at Asn-80. The active-site Charge relay system is Asp-110. Intrachain disulfides connect Cys-144-Cys-209 and Cys-175-Cys-188. Ser-203 (charge relay system) is an active-site residue.

It belongs to the peptidase S1 family. Granzyme subfamily.

The polypeptide is Mast cell protease 2 (Meriones unguiculatus (Mongolian jird)).